A 259-amino-acid polypeptide reads, in one-letter code: MNIDPVALKIGLLEIRWYSLAYIIGILFAYWYVQKIDKYKVFTPESYKSIISWWVTGMILGGRIGYILFYNLNFYMSFPIEMFKLWKGGMSFHGASLGLFCTMYIFCKKYKIKFLSAIDLCLCAVPVGIFLGRIANFINGELYGKVTNTRFGMIFQNSGDFFYRHPSQLYEAFFEGLLLFVVMNLLFFFTKVKSYQGMLFTIFMIWYGIVRFFIEFVREPDVQVGYILFNWITMGQLLSFIMVILGICILRLSRMSHNI.

Transmembrane regions (helical) follow at residues 10 to 30 (IGLL…LFAY), 50 to 70 (IISW…ILFY), 86 to 106 (WKGG…MYIF), and 112 to 132 (IKFL…IFLG). An a 1,2-diacyl-sn-glycero-3-phospho-(1'-sn-glycerol)-binding site is contributed by R133. 3 consecutive transmembrane segments (helical) span residues 169 to 189 (LYEA…LFFF), 197 to 217 (GMLF…IEFV), and 227 to 247 (ILFN…ILGI).

This sequence belongs to the Lgt family.

Its subcellular location is the cell inner membrane. It catalyses the reaction L-cysteinyl-[prolipoprotein] + a 1,2-diacyl-sn-glycero-3-phospho-(1'-sn-glycerol) = an S-1,2-diacyl-sn-glyceryl-L-cysteinyl-[prolipoprotein] + sn-glycerol 1-phosphate + H(+). Its pathway is protein modification; lipoprotein biosynthesis (diacylglyceryl transfer). Functionally, catalyzes the transfer of the diacylglyceryl group from phosphatidylglycerol to the sulfhydryl group of the N-terminal cysteine of a prolipoprotein, the first step in the formation of mature lipoproteins. The polypeptide is Phosphatidylglycerol--prolipoprotein diacylglyceryl transferase (Ehrlichia ruminantium (strain Gardel)).